Reading from the N-terminus, the 750-residue chain is Methylmalonyl-CoA mutase, mitochondrial (750 aa).

The N-terminal 32 residues, 1–32 (MLRAKNQLFLLSPHYLKQVKESSGSRLIQQRL), are a transit peptide targeting the mitochondrion. Gln-50 is a malonyl-CoA binding site. Position 89 is an N6-acetyllysine (Lys-89). Malonyl-CoA contacts are provided by residues 96 to 99 (YPTM) and 106 to 110 (TIRQY). At Lys-212 the chain carries N6-acetyllysine. Malonyl-CoA contacts are provided by residues 216–218 (TIQ), Arg-228, Lys-255, His-265, and 304–306 (RLS). N6-acetyllysine is present on Lys-335. At Lys-343 the chain carries N6-succinyllysine. A Phosphoserine modification is found at Ser-481. N6-succinyllysine is present on Lys-595. An N6-acetyllysine modification is found at Lys-602. One can recognise a B12-binding domain in the interval 614 to 746 (RPRLLVAKMG…DDIEKCLEKK (133 aa)). His-627 lines the adenosylcob(III)alamin pocket.

It belongs to the methylmalonyl-CoA mutase family. In terms of assembly, homodimer. Interacts (the apoenzyme form) with MMAA; the interaction is GTP dependent. Requires adenosylcob(III)alamin as cofactor.

The protein resides in the mitochondrion matrix. It is found in the mitochondrion. Its subcellular location is the cytoplasm. It catalyses the reaction (R)-methylmalonyl-CoA = succinyl-CoA. Its activity is regulated as follows. Inhibited by itaconyl-CoA, a metabolite that inactivates the coenzyme B12 cofactor. Catalyzes the reversible isomerization of methylmalonyl-CoA (MMCoA) (generated from branched-chain amino acid metabolism and degradation of dietary odd chain fatty acids and cholesterol) to succinyl-CoA (3-carboxypropionyl-CoA), a key intermediate of the tricarboxylic acid cycle. In Pongo abelii (Sumatran orangutan), this protein is Methylmalonyl-CoA mutase, mitochondrial (MMUT).